A 359-amino-acid chain; its full sequence is Type-1 angiotensin II receptor (359 aa).

At 1–25 (MILNSSTEDGIKRIQDDCPKAGRHN) the chain is on the extracellular side. An N-linked (GlcNAc...) asparagine glycan is attached at Asn4. Positions 15 and 17 each coordinate angiotensin II. 2 disulfide bridges follow: Cys18/Cys274 and Cys101/Cys180. The helical transmembrane segment at 26–55 (YIFIMIPTLYSIIFVVGIFGNSLVVIVIYF) threads the bilayer. At 56–61 (YMKLKT) the chain is on the cytoplasmic side. The chain crosses the membrane as a helical span at residues 62–89 (VASVFLLNLALADLCFLLTLPLWAVYTA). Topologically, residues 90 to 98 (MEYRWPFGN) are extracellular. Residues 99–125 (YLCKIASASVSFNLYASVFLLTCLSID) traverse the membrane as a helical segment. Topologically, residues 126 to 141 (RYLAIVHPMKSRLRRT) are cytoplasmic. A helical membrane pass occupies residues 142 to 165 (MLVAKVTCIIIWLLAGLASLPTII). The Extracellular segment spans residues 166-190 (HRNVFFIENTNITVCAFHYESQNST). Arg167 lines the angiotensin II pocket. Asn176 is a glycosylation site (N-linked (GlcNAc...) asparagine). 3 residues coordinate angiotensin II: Phe182, His183, and Tyr184. An N-linked (GlcNAc...) asparagine glycan is attached at Asn188. A helical transmembrane segment spans residues 191-216 (LPVGLGLTKNILGFLFPFLIILTSYT). An angiotensin II-binding site is contributed by Lys199. Residues 217–239 (LIWKTLKKAYEIQKNKPRKDDIF) are Cytoplasmic-facing. The chain crosses the membrane as a helical span at residues 240–268 (KIILAIVLFFFFSWVPHQIFTFMDVLIQL). The Extracellular portion of the chain corresponds to 269-278 (GLIRDCKIED). A helical transmembrane segment spans residues 279 to 304 (IVDTAMPITICLAYFNNCLNPLFYGF). Topologically, residues 305-359 (LGKKFKKYFLQLLKYIPPKAKSHSNLSTKMSTLSYRPSENGNSSTKKPAPCIEVE) are cytoplasmic. The segment covering 336–350 (TLSYRPSENGNSSTK) has biased composition (polar residues). The disordered stretch occupies residues 336-359 (TLSYRPSENGNSSTKKPAPCIEVE). A lipid anchor (S-palmitoyl cysteine) is attached at Cys355.

Belongs to the G-protein coupled receptor 1 family. In terms of assembly, interacts with MAS1. Interacts with ARRB1. Interacts with FLNA (via filamin repeat 21); increases PKA-mediated phosphorylation of FLNA. Post-translationally, C-terminal Ser or Thr residues may be phosphorylated. As to expression, adrenal medulla, cortex and kidney.

Its subcellular location is the cell membrane. Functionally, receptor for angiotensin II, a vasoconstricting peptide, which acts as a key regulator of blood pressure and sodium retention by the kidney. The activated receptor in turn couples to G-alpha proteins G(q) (GNAQ, GNA11, GNA14 or GNA15) and thus activates phospholipase C and increases the cytosolic Ca(2+) concentrations, which in turn triggers cellular responses such as stimulation of protein kinase C. The sequence is that of Type-1 angiotensin II receptor (AGTR1) from Bos taurus (Bovine).